Here is a 263-residue protein sequence, read N- to C-terminus: Endonuclease 8 (263 aa).

The active-site Schiff-base intermediate with DNA is Pro2. Catalysis depends on Glu3, which acts as the Proton donor. Residue Lys53 is the Proton donor; for beta-elimination activity of the active site. Positions 70, 125, and 169 each coordinate DNA. Residues 229–263 (KVFHRDGEPCERCGSIIEKTTLSSRPFYWCPGCQH) form an FPG-type zinc finger. Arg253 (proton donor; for delta-elimination activity) is an active-site residue.

This sequence belongs to the FPG family. Requires Zn(2+) as cofactor.

It carries out the reaction 2'-deoxyribonucleotide-(2'-deoxyribose 5'-phosphate)-2'-deoxyribonucleotide-DNA = a 3'-end 2'-deoxyribonucleotide-(2,3-dehydro-2,3-deoxyribose 5'-phosphate)-DNA + a 5'-end 5'-phospho-2'-deoxyribonucleoside-DNA + H(+). In terms of biological role, involved in base excision repair of DNA damaged by oxidation or by mutagenic agents. Acts as a DNA glycosylase that recognizes and removes damaged bases. Has a preference for oxidized pyrimidines, such as thymine glycol, 5,6-dihydrouracil and 5,6-dihydrothymine. Has AP (apurinic/apyrimidinic) lyase activity and introduces nicks in the DNA strand. Cleaves the DNA backbone by beta-delta elimination to generate a single-strand break at the site of the removed base with both 3'- and 5'-phosphates. This Escherichia coli O17:K52:H18 (strain UMN026 / ExPEC) protein is Endonuclease 8.